Reading from the N-terminus, the 351-residue chain is MTNQNDNFLVLKNINKTFGKSVVIDDLDLVIKRGTMVTLLGPSGCGKTTILRLVAGLENPTSGQIFIDGEDVTKSSIQNRDICIVFQSYALFPHMSIGDNVGYGLRMQNIAKEERKQRIREALELVDLAGFEDRFVDQISGGQQQRVALARALVLKPKVLLFDEPLSNLDANLRRSMREKIRELQQSLSITSLYVTHDQTEAFAVSDEVIVMNKGKIVQKAPAKELYQQPNSLFLANFMGESSIFNGQLQGNQVTLNGYQFTLPNAQQFNLPNGDCLVGIRPEAVTLKETGEPSQQCSIKTAVYMGNHWEIVADWAGQDLLINANPEVFNPEQKQAYVHLSSHGVFLLKKE.

An ABC transporter domain is found at 9–239; that stretch reads LVLKNINKTF…PNSLFLANFM (231 aa). 41 to 48 lines the ATP pocket; the sequence is GPSGCGKT.

It belongs to the ABC transporter superfamily. Fe(3+) ion importer (TC 3.A.1.10) family. The complex is composed of two ATP-binding proteins (FbpC), two transmembrane proteins (FbpB) and a solute-binding protein (FbpA).

It localises to the cell inner membrane. It carries out the reaction Fe(3+)(out) + ATP + H2O = Fe(3+)(in) + ADP + phosphate + H(+). Part of the ABC transporter complex FbpABC involved in Fe(3+) ions import. Responsible for energy coupling to the transport system. This Mannheimia succiniciproducens (strain KCTC 0769BP / MBEL55E) protein is Fe(3+) ions import ATP-binding protein FbpC.